The sequence spans 320 residues: Cytochrome f (320 aa).

The signal sequence occupies residues 1 to 35; it reads MQTRNTFSWIREEITRSISVSLMIYIITWASISGA. Heme is bound by residues tyrosine 36, cysteine 56, cysteine 59, and histidine 60. A helical transmembrane segment spans residues 286–306; sequence VQGLLFFLGSVVLAQIFLVLK.

The protein belongs to the cytochrome f family. As to quaternary structure, the 4 large subunits of the cytochrome b6-f complex are cytochrome b6, subunit IV (17 kDa polypeptide, petD), cytochrome f and the Rieske protein, while the 4 small subunits are PetG, PetL, PetM and PetN. The complex functions as a dimer. The cofactor is heme.

It localises to the plastid. The protein resides in the chloroplast thylakoid membrane. In terms of biological role, component of the cytochrome b6-f complex, which mediates electron transfer between photosystem II (PSII) and photosystem I (PSI), cyclic electron flow around PSI, and state transitions. The protein is Cytochrome f of Capsella bursa-pastoris (Shepherd's purse).